Here is a 144-residue protein sequence, read N- to C-terminus: Hemoglobin subunit alpha-1 (144 aa).

N-acetylserine is present on Ser-1. The region spanning 1 to 144 (SLTAKDKSVV…VSAALADKYR (144 aa)) is the Globin domain. His-61 serves as a coordination point for O2. A heme b-binding site is contributed by His-90.

The protein belongs to the globin family. As to quaternary structure, heterotetramer of two alpha chains and two beta chains. As to expression, red blood cells.

In terms of biological role, involved in oxygen transport from gills to the various peripheral tissues. In Oncorhynchus mykiss (Rainbow trout), this protein is Hemoglobin subunit alpha-1 (hba1).